Reading from the N-terminus, the 52-residue chain is Small ribosomal subunit protein uS14 (52 aa).

4 residues coordinate Zn(2+): Cys17, Cys20, Cys35, and Cys38.

It belongs to the universal ribosomal protein uS14 family. Zinc-binding uS14 subfamily. Part of the 30S ribosomal subunit. Requires Zn(2+) as cofactor.

Binds 16S rRNA, required for the assembly of 30S particles. The chain is Small ribosomal subunit protein uS14 from Halobacterium salinarum (strain ATCC 700922 / JCM 11081 / NRC-1) (Halobacterium halobium).